The following is a 73-amino-acid chain: Biotin/lipoyl attachment protein (73 aa).

The region spanning 2 to 69 (TVSIQMAGNL…NEGDVLLELS (68 aa)) is the Biotinyl-binding domain. Lysine 35 is subject to N6-biotinyllysine; alternate. N6-lipoyllysine; alternate is present on lysine 35.

Post-translationally, can be both biotinylated and lipoylated on Lys-35 upon overexpression in E.coli depending on the growth medium; the nature of the modification in situ in B.subtilis is unknown.

The chain is Biotin/lipoyl attachment protein (yngHB) from Bacillus subtilis (strain 168).